The chain runs to 60 residues: Large ribosomal subunit protein uL30 (60 aa).

This sequence belongs to the universal ribosomal protein uL30 family. Part of the 50S ribosomal subunit.

This Bacillus mycoides (strain KBAB4) (Bacillus weihenstephanensis) protein is Large ribosomal subunit protein uL30.